The primary structure comprises 225 residues: Small ribosomal subunit protein uS3 (225 aa).

The 69-residue stretch at 38-106 folds into the KH type-2 domain; it reads LRAHLRRKLS…DVALNIVEIR (69 aa).

The protein belongs to the universal ribosomal protein uS3 family. Part of the 30S ribosomal subunit. Forms a tight complex with proteins S10 and S14.

In terms of biological role, binds the lower part of the 30S subunit head. Binds mRNA in the 70S ribosome, positioning it for translation. The sequence is that of Small ribosomal subunit protein uS3 from Gluconacetobacter diazotrophicus (strain ATCC 49037 / DSM 5601 / CCUG 37298 / CIP 103539 / LMG 7603 / PAl5).